Here is an 89-residue protein sequence, read N- to C-terminus: Small ribosomal subunit protein uS15 (89 aa).

Belongs to the universal ribosomal protein uS15 family. Part of the 30S ribosomal subunit. Forms a bridge to the 50S subunit in the 70S ribosome, contacting the 23S rRNA.

In terms of biological role, one of the primary rRNA binding proteins, it binds directly to 16S rRNA where it helps nucleate assembly of the platform of the 30S subunit by binding and bridging several RNA helices of the 16S rRNA. Forms an intersubunit bridge (bridge B4) with the 23S rRNA of the 50S subunit in the ribosome. This is Small ribosomal subunit protein uS15 from Granulibacter bethesdensis (strain ATCC BAA-1260 / CGDNIH1).